A 475-amino-acid polypeptide reads, in one-letter code: MSEAIFQPTDIVLAKVKGFSAWPAMIIPNELIPDNILKTKPVSVHKGKSGSDKKANEDIDADMESEARDREQSEEEEDIEDFGESEANPEKFIIYTPVLKFRKNDTLKSTYCVKFFCDDSYIWVKPMDMKILTSEDCRKWLSGKQRKNKKLIPAYEMAMRGKNGIDIWEFVEYGSYGKPDEEEYVEEEEEENEPEKKAIRPTRSSSRQRQKRASETEKSEGGNSNKRKRVTRSTRQQAIDASEEEEEEEEEKVQEAVRKRPQRTKTKKVVVSKTKPNPKTKAKKEKPKPPKPIKYHFEDDEDWSIVGLGPQDLSIEKTMDPIAKKLSQKKNLEKHVEIKLDLEDKLAGINKLLCDVLCSAINQAVSIKDDFEIILDELQIALDTRGSRNEFITIFQSNNSLLLNFRILFNLRKRELNKWDLWDRFQDIFKHIYSYQFIPDTEDWQLEQNMEIEEMDREKPSFSEDVKEEESKVGA.

Position 2 is a phosphoserine (Ser2). Thr9 carries the post-translational modification Phosphothreonine. Disordered stretches follow at residues 42 to 84, 181 to 296, and 454 to 475; these read VSVH…DFGE, EEEY…IKYH, and EMDR…KVGA. Ser65 and Ser73 each carry phosphoserine. Acidic residues-rich tracts occupy residues 72-84, 181-193, and 241-252; these read QSEE…DFGE, EEEY…EENE, and ASEEEEEEEEEK. Phosphoserine is present on Ser242. Basic residues predominate over residues 259–294; that stretch reads KRPQRTKTKKVVVSKTKPNPKTKAKKEKPKPPKPIK. Over residues 456–475 the composition is skewed to basic and acidic residues; the sequence is DREKPSFSEDVKEEESKVGA.

In terms of assembly, component of the ISW1B complex, which at least consists of ISW1, IOC2 and IOC4.

Its subcellular location is the nucleus. Functionally, functions as a component of the ISW1B complex, which acts in remodeling the chromatin by catalyzing an ATP-dependent alteration in the structure of nucleosomal DNA. The ISW1B complex acts within coding regions to control the amount of RNA polymerase II released into productive elongation and to coordinate elongation with termination and pre-mRNA processing. The polypeptide is ISWI one complex protein 4 (IOC4) (Saccharomyces cerevisiae (strain ATCC 204508 / S288c) (Baker's yeast)).